We begin with the raw amino-acid sequence, 257 residues long: Ribosome-inactivating protein charybdin (257 aa).

Glu-167 is a catalytic residue. A disulfide bridge connects residues Cys-217 and Cys-254.

The protein belongs to the ribosome-inactivating protein family. Type 1 RIP subfamily.

The enzyme catalyses Endohydrolysis of the N-glycosidic bond at one specific adenosine on the 28S rRNA.. Functionally, inhibits translation in rabbit reticulocytes. This chain is Ribosome-inactivating protein charybdin, found in Drimia maritima (Sea squill).